The following is a 513-amino-acid chain: Maturase K (513 aa).

The protein belongs to the intron maturase 2 family. MatK subfamily.

The protein localises to the plastid. It is found in the chloroplast. Its function is as follows. Usually encoded in the trnK tRNA gene intron. Probably assists in splicing its own and other chloroplast group II introns. The chain is Maturase K from Pinus parviflora (Japanese white pine).